A 400-amino-acid chain; its full sequence is Jasmonate-induced oxygenase 1 (400 aa).

Residues 248–349 (DVGACLRVNY…RVSLAFFYNP (102 aa)) enclose the Fe2OG dioxygenase domain. Arginine 254 contacts jasmonate. Positions 256 and 258 each coordinate 2-oxoglutarate. Fe cation-binding residues include histidine 273, aspartate 275, and histidine 330. 2 residues coordinate 2-oxoglutarate: arginine 340 and serine 342. Arginine 379 and arginine 383 together coordinate jasmonate.

This sequence belongs to the iron/ascorbate-dependent oxidoreductase family. The cofactor is L-ascorbate. Fe(2+) serves as cofactor.

It catalyses the reaction jasmonate + 2-oxoglutarate + O2 = (1R,2R)-12-hydroxyjasmonate + succinate + CO2. 2-oxoglutarate-dependent dioxygenase involved in the oxidation of jasmonate (JA), a stress-induced phytohormone synthesized in response to attack by pathogens and herbivores, which triggers the activation of defense responses via the JA-mediated signaling pathway. Converts JA to 12-hydroxyjasmonate (12OH-JA), an inactive form of JA. Prevents over-accumulation of JA and indirectly its bioactive form JA-Ile under stress response. Acts as a negative regulator of JA-mediated defense signaling, by contributing to 12OH-JA accumulation, which represses JA defense responses upon infection by the fungal pathogen Botrytis cinerea and the herbivorous caterpillar Mamestra brassicae. This chain is Jasmonate-induced oxygenase 1, found in Arabidopsis thaliana (Mouse-ear cress).